A 596-amino-acid chain; its full sequence is Protein Malvolio (596 aa).

A disordered region spans residues 1 to 34; the sequence is MSSNEAYHEPGAGGDGPGGSSGASGGGSQRSNQL. A compositionally biased stretch (gly residues) spans 11-28; the sequence is GAGGDGPGGSSGASGGGS. N-linked (GlcNAc...) asparagine glycosylation occurs at Asn41. The next 7 membrane-spanning stretches (helical) occupy residues 77–97, 105–125, 154–174, 186–206, 216–236, 263–283, and 309–329; these read LWAFTGPGFLMSIAYLDPGNI, AAAKYKILWVLLWATVLGLLM, WILWIMIEIAIIGSDMQEVIG, VVPLWGGVLITIVDTFTFLFL, FLFGTLITIMAVSFGYEYIVS, AVGVVGAVIMPHNLYLHSALV, and VALFVSFIINLFVVAVFAHGM. An N-linked (GlcNAc...) asparagine glycan is attached at Asn359. 5 helical membrane passes run 373–393, 424–444, 463–483, 490–510, and 520–540; these read LFLGCTFGAVAMYIWGVGILA, VLVTRCIAIIPTFCLAMFSKM, PFAAIPTIAFTSCAAIMGEFV, IVSILLTIVVIGVNLYFVVVQ, and LLALVCIFAILYILFNLYLVI. An N-linked (GlcNAc...) asparagine glycan is attached at Asn574.

The protein belongs to the NRAMP family. In terms of tissue distribution, expressed in macrophages and in the nervous system.

It localises to the membrane. Its function is as follows. Putative transporter required for normal taste behavior. May be a nitrite/nitrate transporter. This chain is Protein Malvolio (Mvl), found in Drosophila melanogaster (Fruit fly).